The following is a 105-amino-acid chain: Immunoglobulin lambda-like polypeptide 1 (105 aa).

Positions 1–105 (QPKSDPLVTL…EKSVSPAECS (105 aa)) are c region. One can recognise an Ig-like C1-type domain in the interval 6–100 (PLVTLFLPSL…EGNTVEKSVS (95 aa)). Cys27 and Cys86 are disulfide-bonded.

Associates non-covalently with VPREB1A. Interacts with SYNV1/HRD1 (via N-terminus); this interaction leads to increased IGLL1 ubiquitination and degradation in pre-B cells, possibly through a lysosomal, not proteasomal, pathway.

It localises to the endoplasmic reticulum. Its subcellular location is the secreted. Its function is as follows. Critical for B-cell development. This Mus spretus (Western Mediterranean mouse) protein is Immunoglobulin lambda-like polypeptide 1 (Igll1).